Reading from the N-terminus, the 501-residue chain is Aldehyde dehydrogenase 1A1 (501 aa).

Residue serine 2 is modified to N-acetylserine. Lysine 91 and lysine 128 each carry N6-acetyllysine. Residues isoleucine 167–asparagine 170, lysine 193–glutamate 196, glycine 226–proline 227, and glycine 246–serine 247 contribute to the NAD(+) site. Lysine 252 is modified (N6-acetyllysine). Glutamate 269 functions as the Proton acceptor in the catalytic mechanism. Glutamate 269–glycine 271 contacts NAD(+). Residue cysteine 303 is the Nucleophile of the active site. The mediates interaction with PRMT3 stretch occupies residues leucine 336–serine 501. Threonine 337 carries the phosphothreonine modification. Glutamate 349–lysine 353 is a binding site for NAD(+). N6-acetyllysine is present on residues lysine 353 and lysine 367. Glutamate 400–phenylalanine 402 is an NAD(+) binding site. Residue lysine 410 is modified to N6-acetyllysine. Phosphoserine is present on serine 413. 3 positions are modified to N6-acetyllysine: lysine 419, lysine 435, and lysine 495.

This sequence belongs to the aldehyde dehydrogenase family. In terms of assembly, homotetramer. Interacts with PRMT3; the interaction is direct, inhibits ALDH1A1 aldehyde dehydrogenase activity and is independent of the methyltransferase activity of PRMT3. The N-terminus is blocked most probably by acetylation. Expressed in retina. Expressed in lens and cornea (at protein level). Expressed by midbrain dopamine neurons.

Its subcellular location is the cytoplasm. It localises to the cytosol. It is found in the cell projection. The protein resides in the axon. The catalysed reaction is an aldehyde + NAD(+) + H2O = a carboxylate + NADH + 2 H(+). It catalyses the reaction all-trans-retinal + NAD(+) + H2O = all-trans-retinoate + NADH + 2 H(+). It carries out the reaction 9-cis-retinal + NAD(+) + H2O = 9-cis-retinoate + NADH + 2 H(+). The enzyme catalyses 11-cis-retinal + NAD(+) + H2O = 11-cis-retinoate + NADH + 2 H(+). The catalysed reaction is 13-cis-retinal + NAD(+) + H2O = 13-cis-retinoate + NADH + 2 H(+). It catalyses the reaction 4-aminobutanal + NAD(+) + H2O = 4-aminobutanoate + NADH + 2 H(+). It carries out the reaction 3-deoxyglucosone + NAD(+) + H2O = 2-dehydro-3-deoxy-D-gluconate + NADH + 2 H(+). The enzyme catalyses (E)-4-hydroxynon-2-enal + NAD(+) + H2O = (E)-4-hydroxynon-2-enoate + NADH + 2 H(+). The catalysed reaction is malonaldehyde + NAD(+) + H2O = 3-oxopropanoate + NADH + 2 H(+). It catalyses the reaction hexanal + NAD(+) + H2O = hexanoate + NADH + 2 H(+). It carries out the reaction propanal + NAD(+) + H2O = propanoate + NADH + 2 H(+). The enzyme catalyses acetaldehyde + NAD(+) + H2O = acetate + NADH + 2 H(+). The catalysed reaction is benzaldehyde + NAD(+) + H2O = benzoate + NADH + 2 H(+). Its pathway is cofactor metabolism; retinol metabolism. The aminobutyraldehyde dehydrogenase activity is negatively regulated by ethanol in vivo. Functionally, cytosolic dehydrogenase that catalyzes the irreversible oxidation of a wide range of aldehydes to their corresponding carboxylic acid. Functions downstream of retinol dehydrogenases and catalyzes the oxidation of retinaldehyde into retinoic acid, the second step in the oxidation of retinol/vitamin A into retinoic acid. This pathway is crucial to control the levels of retinol and retinoic acid, two important molecules which excess can be teratogenic and cytotoxic. Also oxidizes aldehydes resulting from lipid peroxidation like (E)-4-hydroxynon-2-enal/HNE, malonaldehyde and hexanal that form protein adducts and are highly cytotoxic. By participating for instance to the clearance of (E)-4-hydroxynon-2-enal/HNE in the lens epithelium prevents the formation of HNE-protein adducts and lens opacification. Also functions downstream of fructosamine-3-kinase in the fructosamine degradation pathway by catalyzing the oxidation of 3-deoxyglucosone, the carbohydrate product of fructosamine 3-phosphate decomposition, which is itself a potent glycating agent that may react with lysine and arginine side-chains of proteins. Also has an aminobutyraldehyde dehydrogenase activity and is probably part of an alternative pathway for the biosynthesis of GABA/4-aminobutanoate in midbrain, thereby playing a role in GABAergic synaptic transmission. This is Aldehyde dehydrogenase 1A1 from Mus musculus (Mouse).